The chain runs to 240 residues: Methylthioribulose-1-phosphate dehydratase (240 aa).

Position 99 (Cys99) interacts with substrate. Residues His116 and His118 each contribute to the Zn(2+) site. Residue Glu145 is the Proton donor/acceptor of the active site. His201 contacts Zn(2+).

Belongs to the aldolase class II family. MtnB subfamily. It depends on Zn(2+) as a cofactor.

It localises to the cytoplasm. It catalyses the reaction 5-(methylsulfanyl)-D-ribulose 1-phosphate = 5-methylsulfanyl-2,3-dioxopentyl phosphate + H2O. Its pathway is amino-acid biosynthesis; L-methionine biosynthesis via salvage pathway; L-methionine from S-methyl-5-thio-alpha-D-ribose 1-phosphate: step 2/6. Catalyzes the dehydration of methylthioribulose-1-phosphate (MTRu-1-P) into 2,3-diketo-5-methylthiopentyl-1-phosphate (DK-MTP-1-P). The sequence is that of Methylthioribulose-1-phosphate dehydratase from Paracoccidioides brasiliensis (strain Pb18).